A 384-amino-acid polypeptide reads, in one-letter code: tRNA-specific 2-thiouridylase MnmA (384 aa).

Residues 29–36 and Leu55 contribute to the ATP site; that span reads AMSGGVDS. The active-site Nucleophile is the Cys123. Cys123 and Cys220 form a disulfide bridge. Gly147 is a binding site for ATP. The segment at 169-171 is interaction with tRNA; sequence RDQ. The active-site Cysteine persulfide intermediate is Cys220.

Belongs to the MnmA/TRMU family.

It localises to the cytoplasm. The catalysed reaction is S-sulfanyl-L-cysteinyl-[protein] + uridine(34) in tRNA + AH2 + ATP = 2-thiouridine(34) in tRNA + L-cysteinyl-[protein] + A + AMP + diphosphate + H(+). In terms of biological role, catalyzes the 2-thiolation of uridine at the wobble position (U34) of tRNA, leading to the formation of s(2)U34. The chain is tRNA-specific 2-thiouridylase MnmA from Dinoroseobacter shibae (strain DSM 16493 / NCIMB 14021 / DFL 12).